The following is a 364-amino-acid chain: tRNA 2-selenouridine synthase (364 aa).

Residues 14-137 (LIADTPIIDV…LRQTAIQATI (124 aa)) form the Rhodanese domain. Cys-97 functions as the S-selanylcysteine intermediate in the catalytic mechanism.

Belongs to the SelU family. As to quaternary structure, monomer.

It carries out the reaction 5-methylaminomethyl-2-thiouridine(34) in tRNA + selenophosphate + (2E)-geranyl diphosphate + H2O + H(+) = 5-methylaminomethyl-2-selenouridine(34) in tRNA + (2E)-thiogeraniol + phosphate + diphosphate. It catalyses the reaction 5-methylaminomethyl-2-thiouridine(34) in tRNA + (2E)-geranyl diphosphate = 5-methylaminomethyl-S-(2E)-geranyl-thiouridine(34) in tRNA + diphosphate. The catalysed reaction is 5-methylaminomethyl-S-(2E)-geranyl-thiouridine(34) in tRNA + selenophosphate + H(+) = 5-methylaminomethyl-2-(Se-phospho)selenouridine(34) in tRNA + (2E)-thiogeraniol. The enzyme catalyses 5-methylaminomethyl-2-(Se-phospho)selenouridine(34) in tRNA + H2O = 5-methylaminomethyl-2-selenouridine(34) in tRNA + phosphate. In terms of biological role, involved in the post-transcriptional modification of the uridine at the wobble position (U34) of tRNA(Lys), tRNA(Glu) and tRNA(Gln). Catalyzes the conversion of 2-thiouridine (S2U-RNA) to 2-selenouridine (Se2U-RNA). Acts in a two-step process involving geranylation of 2-thiouridine (S2U) to S-geranyl-2-thiouridine (geS2U) and subsequent selenation of the latter derivative to 2-selenouridine (Se2U) in the tRNA chain. This chain is tRNA 2-selenouridine synthase, found in Escherichia coli O45:K1 (strain S88 / ExPEC).